A 352-amino-acid chain; its full sequence is Tubby-like F-box protein 10 (352 aa).

Over residues 1-11 (MAAVREPREEA) the composition is skewed to basic and acidic residues. Positions 1 to 23 (MAAVREPREEAAVGEGEGEEEGR) are disordered. Positions 22 to 78 (GRWGGLLPELVEEVVRRVEASGGERWPARKDLVSCACVCRRWREAAAAVVRPLPESG) constitute an F-box domain.

It belongs to the TUB family. Ubiquitous.

This chain is Tubby-like F-box protein 10 (TULP10), found in Oryza sativa subsp. japonica (Rice).